The following is a 289-amino-acid chain: Prepilin leader peptidase/N-methyltransferase (289 aa).

A helical transmembrane segment spans residues 13 to 33 (AFVLCALVLGLLVGSFLNVVI). Zn(2+) is bound by residues C72, C75, C97, and C100. A run of 5 helical transmembrane segments spans residues 128 to 148 (FSWQ…MSMI), 159 to 179 (LVLP…FASL), 183 to 203 (LWGA…FKLV), 228 to 248 (VLPL…TVML), and 256 to 276 (GTPI…LLWG).

Belongs to the peptidase A24 family. It depends on Zn(2+) as a cofactor.

It is found in the cell inner membrane. It catalyses the reaction Typically cleaves a -Gly-|-Phe- bond to release an N-terminal, basic peptide of 5-8 residues from type IV prepilin, and then N-methylates the new N-terminal amino group, the methyl donor being S-adenosyl-L-methionine.. Its function is as follows. Plays an essential role in type IV pili and type II pseudopili formation by proteolytically removing the leader sequence from substrate proteins and subsequently monomethylating the alpha-amino group of the newly exposed N-terminal phenylalanine. The protein is Prepilin leader peptidase/N-methyltransferase (pilD) of Stutzerimonas stutzeri (Pseudomonas stutzeri).